The following is a 461-amino-acid chain: Ornithine decarboxylase (461 aa).

Lys-69 carries the post-translational modification N6-(pyridoxal phosphate)lysine. Residues Ser-200, Gly-237, and 274-277 contribute to the pyridoxal 5'-phosphate site; that span reads EPGR. A Phosphoserine; by CK2 modification is found at Ser-303. 331 to 332 contributes to the substrate binding site; that stretch reads YD. The Proton donor; shared with dimeric partner role is filled by Cys-360. Cys-360 bears the S-nitrosocysteine mark. Substrate is bound at residue Asp-361. Tyr-389 is a binding site for pyridoxal 5'-phosphate.

It belongs to the Orn/Lys/Arg decarboxylase class-II family. In terms of assembly, homodimer. Only the dimer is catalytically active, as the active sites are constructed of residues from both monomers. Requires pyridoxal 5'-phosphate as cofactor.

It carries out the reaction L-ornithine + H(+) = putrescine + CO2. It participates in amine and polyamine biosynthesis; putrescine biosynthesis via L-ornithine pathway; putrescine from L-ornithine: step 1/1. Its activity is regulated as follows. Inhibited by antizymes (AZs) OAZ1, OAZ2 and OAZ3 in response to polyamine levels. AZs inhibit the assembly of the functional homodimer by binding to ODC monomers. Additionally, OAZ1 targets ODC monomers for ubiquitin-independent proteolytic destruction by the 26S proteasome. In terms of biological role, catalyzes the first and rate-limiting step of polyamine biosynthesis that converts ornithine into putrescine, which is the precursor for the polyamines, spermidine and spermine. Polyamines are essential for cell proliferation and are implicated in cellular processes, ranging from DNA replication to apoptosis. This is Ornithine decarboxylase (ODC1) from Bos taurus (Bovine).